Reading from the N-terminus, the 320-residue chain is Tryptophan--tRNA ligase (320 aa).

Residues 8-10 (QPT) and 16-17 (GN) each bind ATP. The short motif at 9–17 (PTGRPHWGN) is the 'HIGH' region element. Position 131 (Asp131) interacts with L-tryptophan. ATP contacts are provided by residues 143 to 145 (GVD), Val182, and 189 to 193 (KMSKS). Residues 189 to 193 (KMSKS) carry the 'KMSKS' region motif.

The protein belongs to the class-I aminoacyl-tRNA synthetase family. In terms of assembly, homodimer.

It localises to the cytoplasm. It carries out the reaction tRNA(Trp) + L-tryptophan + ATP = L-tryptophyl-tRNA(Trp) + AMP + diphosphate + H(+). In terms of biological role, catalyzes the attachment of tryptophan to tRNA(Trp). The polypeptide is Tryptophan--tRNA ligase (Rhodopirellula baltica (strain DSM 10527 / NCIMB 13988 / SH1)).